Consider the following 899-residue polypeptide: 1,4-alpha-glucan-branching enzyme 3, chloroplastic/amyloplastic (899 aa).

The transit peptide at 1 to 49 directs the protein to the chloroplast; the sequence is MVSLSNQTRFSFHPNNLVVSEKRRLGISGVNFPRKIKLKITCFAAERPR. The interval 47 to 67 is disordered; sequence RPRQEKQKKKSQSQSTSDAEA. The Proton donor role is filled by E612.

The protein belongs to the glycosyl hydrolase 13 family. GlgB subfamily. In terms of assembly, monomer. As to expression, mostly expressed in flowers and inflorescence, and, to a lower extent, in seedlings, roots, stems, leaves, siliques and seeds.

It is found in the plastid. Its subcellular location is the chloroplast stroma. It localises to the amyloplast. The enzyme catalyses Transfers a segment of a (1-&gt;4)-alpha-D-glucan chain to a primary hydroxy group in a similar glucan chain.. It functions in the pathway glycan biosynthesis; starch biosynthesis. Its function is as follows. Catalyzes the formation of the alpha-1,6-glucosidic linkages in starch by scission of a 1,4-alpha-linked oligosaccharide from growing alpha-1,4-glucan chains and the subsequent attachment of the oligosaccharide to the alpha-1,6 position. Essential during embryogenesis. The sequence is that of 1,4-alpha-glucan-branching enzyme 3, chloroplastic/amyloplastic (SBE3) from Arabidopsis thaliana (Mouse-ear cress).